Here is a 185-residue protein sequence, read N- to C-terminus: Probable chorismate pyruvate-lyase 2 (185 aa).

Positions 80, 118, and 170 each coordinate substrate.

This sequence belongs to the UbiC family.

The protein resides in the cytoplasm. It carries out the reaction chorismate = 4-hydroxybenzoate + pyruvate. It participates in cofactor biosynthesis; ubiquinone biosynthesis. Its function is as follows. Removes the pyruvyl group from chorismate, with concomitant aromatization of the ring, to provide 4-hydroxybenzoate (4HB) for the ubiquinone pathway. This is Probable chorismate pyruvate-lyase 2 from Pseudomonas entomophila (strain L48).